The primary structure comprises 1205 residues: Nitric oxide synthase 3 (1205 aa).

Disordered regions lie at residues 1–20 and 26–73; these read MGNLKSVGQEPGPPCGLGLG and CGKQ…FPRV. Positions 33–47 are enriched in pro residues; sequence SPAPEPSWAPAPATP. Residues Cys96 and Cys101 each contribute to the Zn(2+) site. Positions 100 to 489 are interaction with NOSIP; it reads RCLGSLVLPR…PDPWKGSAAK (390 aa). Ser104 lines the (6R)-L-erythro-5,6,7,8-tetrahydrobiopterin pocket. Ser116 is subject to Phosphoserine. Cys186 is a binding site for heme b. Positions 250, 359, 360, and 364 each coordinate L-arginine. Arg368 lines the (6R)-L-erythro-5,6,7,8-tetrahydrobiopterin pocket. Asn369 lines the L-arginine pocket. The (6R)-L-erythro-5,6,7,8-tetrahydrobiopterin site is built by Ala449, Trp450, and Phe463. Tyr478 contacts heme b. Thr498 carries the post-translational modification Phosphothreonine. Positions 529, 530, 531, 533, 575, and 576 each coordinate FMN. Phosphoserine occurs at positions 618, 636, and 641. FMN-binding residues include Ser657, Cys664, Glu690, and Gln694. Arg781 lines the NADP(+) pocket. A disordered region spans residues 796-850; the sequence is LQYQPGDHISPHPPPRSSHRPGQGGPRVAPFSERPLMPRTPPPGGPPPSWVRDPR. Residue His803 coordinates FAD. Residues 833 to 844 show a composition bias toward pro residues; the sequence is PRTPPPGGPPPS. Arg939, Tyr941, Ser942, Thr957, and Ala959 together coordinate FAD. Positions 1018, 1051, 1080, 1081, 1087, 1089, and 1091 each coordinate NADP(+). Thr1177 bears the Phosphothreonine mark. Ser1179 and Ser1181 each carry phosphoserine.

Belongs to the NOS family. Homodimer. Interacts with NOSIP and NOSTRIN. Interacts with HSP90AB1. Forms a complex with ASL, ASS1 and SLC7A1; the complex regulates cell-autonomous L-arginine synthesis and citrulline recycling while channeling extracellular L-arginine to nitric oxide synthesis pathway. Heme b serves as cofactor. FAD is required as a cofactor. Requires FMN as cofactor. The cofactor is (6R)-L-erythro-5,6,7,8-tetrahydrobiopterin.

It is found in the membrane. It localises to the caveola. The protein localises to the cytoplasm. Its subcellular location is the cytoskeleton. The protein resides in the golgi apparatus. It is found in the cell membrane. It catalyses the reaction 2 L-arginine + 3 NADPH + 4 O2 + H(+) = 2 L-citrulline + 2 nitric oxide + 3 NADP(+) + 4 H2O. Stimulated by calcium/calmodulin. Inhibited by NOSIP and NOSTRIN. Its function is as follows. Produces nitric oxide (NO) which is implicated in vascular smooth muscle relaxation through a cGMP-mediated signal transduction pathway. NO mediates vascular endothelial growth factor (VEGF)-induced angiogenesis in coronary vessels and promotes blood clotting through the activation of platelets. The sequence is that of Nitric oxide synthase 3 (NOS3) from Ovis aries (Sheep).